A 217-amino-acid chain; its full sequence is Large ribosomal subunit protein eL14 (217 aa).

K79 is modified (N6-acetyllysine). Position 85 is an N6-acetyllysine; alternate (K85). An N6-succinyllysine; alternate modification is found at K85. K124 is covalently cross-linked (Glycyl lysine isopeptide (Lys-Gly) (interchain with G-Cter in SUMO2)). S139 bears the Phosphoserine mark. Positions 162-217 (KVPAKKATGPGKKAAGQKAPAQKAAGQKAAPPAKGQKGQKTPAQKAPAPKAAGKKA) are disordered. Residues 173–177 (KKAAG) form a 1-1; approximate repeat. The interval 173 to 192 (KKAAGQKAPAQKAAGQKAAP) is 4 X 5 AA tandem repeats of Q-K-A-[APS]-X. 5 consecutive repeat copies span residues 178-182 (QKAPA), 183-187 (QKAAG), 188-192 (QKAAP), 195-197 (KGQ), and 198-200 (KGQ). The segment at 195-200 (KGQKGQ) is 2 X 3 AA tandem repeats of K-G-Q. An N6-succinyllysine modification is found at K206.

It belongs to the eukaryotic ribosomal protein eL14 family. As to quaternary structure, component of the large ribosomal subunit.

It is found in the cytoplasm. In terms of biological role, component of the large ribosomal subunit. The ribosome is a large ribonucleoprotein complex responsible for the synthesis of proteins in the cell. The polypeptide is Large ribosomal subunit protein eL14 (Rpl14) (Mus musculus (Mouse)).